We begin with the raw amino-acid sequence, 389 residues long: Alcohol dehydrogenase-like 5 (389 aa).

Positions 54, 56, 77, 107, 110, 113, 121, and 186 each coordinate Zn(2+). Positions 56 and 77 each coordinate an alcohol. Thr56 contacts NAD(+). NAD(+) is bound by residues 211-216 (GLGAVG), Asp235, Lys240, 305-307 (LGI), Phe332, and Arg382.

The protein belongs to the zinc-containing alcohol dehydrogenase family. Class-III subfamily. In terms of assembly, homodimer. Zn(2+) is required as a cofactor.

The protein resides in the cytoplasm. The enzyme catalyses a primary alcohol + NAD(+) = an aldehyde + NADH + H(+). It catalyses the reaction a secondary alcohol + NAD(+) = a ketone + NADH + H(+). The sequence is that of Alcohol dehydrogenase-like 5 from Arabidopsis thaliana (Mouse-ear cress).